Reading from the N-terminus, the 151-residue chain is tRNA-specific adenosine deaminase (151 aa).

In terms of domain architecture, CMP/dCMP-type deaminase spans 1 to 111; the sequence is MGKEYFLKVA…LDKKHGGVVS (111 aa). Histidine 52 provides a ligand contact to Zn(2+). Catalysis depends on glutamate 54, which acts as the Proton donor. Residues cysteine 82 and cysteine 85 each coordinate Zn(2+).

It belongs to the cytidine and deoxycytidylate deaminase family. As to quaternary structure, homodimer. It depends on Zn(2+) as a cofactor.

It carries out the reaction adenosine(34) in tRNA + H2O + H(+) = inosine(34) in tRNA + NH4(+). Catalyzes the deamination of adenosine to inosine at the wobble position 34 of tRNA(Arg2). This is tRNA-specific adenosine deaminase from Aquifex aeolicus (strain VF5).